A 225-amino-acid chain; its full sequence is Cytidylate kinase (225 aa).

Residue 10–18 (GPASSGKST) participates in ATP binding.

It belongs to the cytidylate kinase family. Type 1 subfamily.

It localises to the cytoplasm. The enzyme catalyses CMP + ATP = CDP + ADP. It carries out the reaction dCMP + ATP = dCDP + ADP. The polypeptide is Cytidylate kinase (Streptococcus suis (strain 98HAH33)).